The sequence spans 159 residues: Phosphodiesterase delta-like protein (159 aa).

The protein belongs to the PDE6D/unc-119 family.

This is Phosphodiesterase delta-like protein (pdl-1) from Caenorhabditis elegans.